The sequence spans 551 residues: uncharacterized protein (551 aa).

The next 6 membrane-spanning stretches (helical) occupy residues 1–21 (MIAY…IVNS), 25–45 (WTYF…LMVS), 99–119 (GALF…FGFN), 124–144 (LGVL…SLMW), 266–286 (FAFL…GVFY), and 490–510 (FLDL…SAED).

Its subcellular location is the cell membrane. This is an uncharacterized protein from Haemophilus influenzae (strain ATCC 51907 / DSM 11121 / KW20 / Rd).